The following is a 185-amino-acid chain: Peptidyl-tRNA hydrolase (185 aa).

TRNA is bound at residue tyrosine 14. The active-site Proton acceptor is the histidine 19. 3 residues coordinate tRNA: tyrosine 64, asparagine 66, and asparagine 112.

It belongs to the PTH family. As to quaternary structure, monomer.

It localises to the cytoplasm. The catalysed reaction is an N-acyl-L-alpha-aminoacyl-tRNA + H2O = an N-acyl-L-amino acid + a tRNA + H(+). Functionally, hydrolyzes ribosome-free peptidyl-tRNAs (with 1 or more amino acids incorporated), which drop off the ribosome during protein synthesis, or as a result of ribosome stalling. Its function is as follows. Catalyzes the release of premature peptidyl moieties from peptidyl-tRNA molecules trapped in stalled 50S ribosomal subunits, and thus maintains levels of free tRNAs and 50S ribosomes. This Exiguobacterium sibiricum (strain DSM 17290 / CCUG 55495 / CIP 109462 / JCM 13490 / 255-15) protein is Peptidyl-tRNA hydrolase.